Reading from the N-terminus, the 790-residue chain is Kinesin-like protein KIF9 (790 aa).

The Kinesin motor domain occupies 6 to 340; it reads KVHAFVRVKP…LRFASRMKLV (335 aa). ATP contacts are provided by residues 12–14 and 93–100; these read RVK and GQTGAGKT. A coiled-coil region spans residues 342-380; the sequence is TEPAINEKYDAERMVKNLEKELALLKQELAIHDSLTNRT. The disordered stretch occupies residues 477–578; sequence QNFGLGVAPF…IRPDTPPSKP (102 aa). The span at 525–534 shows a compositional bias: polar residues; the sequence is VSTSKTQLVP. Thr-530 is subject to Phosphothreonine. Composition is skewed to basic and acidic residues over residues 537 to 552 and 561 to 570; these read KDGD…RETS and SPKEELRPIR. Phosphoserine is present on Ser-546. The stretch at 658–690 forms a coiled coil; that stretch reads LLILKLKDLKKQYRSEYQDLRDLRAEIQYCQHL.

This sequence belongs to the TRAFAC class myosin-kinesin ATPase superfamily. Kinesin family. In terms of assembly, interacts with HYDIN.

It is found in the cytoplasm. Its subcellular location is the cytoskeleton. It localises to the cell projection. The protein localises to the cilium. The protein resides in the flagellum. It is found in the flagellum axoneme. In terms of biological role, essential for normal male fertility and for progressive motility of spermatozoa. The sequence is that of Kinesin-like protein KIF9 (KIF9) from Homo sapiens (Human).